The sequence spans 298 residues: ADP/ATP translocase 1 (298 aa).

Topologically, residues 1-7 (MGDHAWS) are mitochondrial intermembrane. G2 bears the N-acetylglycine mark. One copy of the Solcar 1 repeat lies at 6–98 (WSFLKDFLAG…FAFKDKYKQL (93 aa)). S7 carries the phosphoserine modification. Residues 8–37 (FLKDFLAGGVAAAVSKTAVAPIERVKLLLQ) traverse the membrane as a helical segment. Topologically, residues 38–74 (VQHASKQISAEKQYKGIIDCVVRIPKEQGFLSFWRGN) are mitochondrial matrix. An N6,N6,N6-trimethyllysine modification is found at K52. Residues 75 to 99 (LANVIRYFPTQALNFAFKDKYKQLF) traverse the membrane as a helical segment. ADP is bound by residues R80 and K92. At 100 to 109 (LGGVDRHKQF) the chain is on the mitochondrial intermembrane side. The chain crosses the membrane as a helical span at residues 110–130 (WRYFAGNLASGGAAGATSLCF). Solcar repeat units lie at residues 111 to 201 (RYFA…AKGM) and 212 to 297 (VSWM…IKKY). Topologically, residues 131 to 178 (VYPLDFARTRLAADVGKGAAQREFHGLGDCIIKIFKSDGLRGLYQGFN) are mitochondrial matrix. An N6-succinyllysine modification is found at K147. Residue C160 is modified to S-nitrosocysteine. The helical transmembrane segment at 179 to 199 (VSVQGIIIYRAAYFGVYDTAK) threads the bilayer. The Mitochondrial intermembrane segment spans residues 200–210 (GMLPDPKNVHI). Residues 211-231 (FVSWMIAQSVTAVAGLVSYPF) traverse the membrane as a helical segment. Over 232 to 273 (DTVRRRMMMQSGRKGADIMYTGTVDCWRKIAKDEGAKAFFKG) the chain is Mitochondrial matrix. R235 serves as a coordination point for ADP. The tract at residues 235 to 240 (RRRMMM) is important for transport activity. Positions 235-240 (RRRMMM) match the Nucleotide carrier signature motif motif. N6-succinyllysine occurs at positions 245 and 272. Residues 274–291 (AWSNVLRGMGGAFVLVLY) traverse the membrane as a helical segment. Over 292 to 298 (DEIKKYV) the chain is Mitochondrial intermembrane.

Belongs to the mitochondrial carrier (TC 2.A.29) family. Monomer. Found in a complex with ARL2, ARL2BP and SLC25A4/ANT1. Interacts with ARL2BP. Interacts with ARHGAP11B, thereby inhibiting the mitochondrial permeability transition pore (mPTP). Interacts with TIMM44; leading to inhibit the presequence translocase TIMM23, thereby promoting stabilization of PINK1. As to quaternary structure, (Microbial infection) Interacts with HIV-1 Vpr. In terms of processing, under cell death induction, transglutaminated by TGM2. Transglutamination leads to formation of covalent cross-links between a glutamine and the epsilon-amino group of a lysine residue, forming polymers. As to expression, expressed in erythrocytes (at protein level).

It is found in the mitochondrion inner membrane. The protein resides in the membrane. It carries out the reaction ADP(in) + ATP(out) = ADP(out) + ATP(in). It catalyses the reaction H(+)(in) = H(+)(out). The matrix-open state (m-state) is inhibited by the membrane-permeable bongkrekic acid (BKA). The cytoplasmic-open state (c-state) is inhibited by the membrane-impermeable toxic inhibitor carboxyatractyloside (CATR). Proton transporter activity is inhibited by ADP:ATP antiporter activity. Its function is as follows. ADP:ATP antiporter that mediates import of ADP into the mitochondrial matrix for ATP synthesis, and export of ATP out to fuel the cell. Cycles between the cytoplasmic-open state (c-state) and the matrix-open state (m-state): operates by the alternating access mechanism with a single substrate-binding site intermittently exposed to either the cytosolic (c-state) or matrix (m-state) side of the inner mitochondrial membrane. In addition to its ADP:ATP antiporter activity, also involved in mitochondrial uncoupling and mitochondrial permeability transition pore (mPTP) activity. Plays a role in mitochondrial uncoupling by acting as a proton transporter: proton transport uncouples the proton flows via the electron transport chain and ATP synthase to reduce the efficiency of ATP production and cause mitochondrial thermogenesis. Proton transporter activity is inhibited by ADP:ATP antiporter activity, suggesting that SLC25A4/ANT1 acts as a master regulator of mitochondrial energy output by maintaining a delicate balance between ATP production (ADP:ATP antiporter activity) and thermogenesis (proton transporter activity). Proton transporter activity requires free fatty acids as cofactor, but does not transport it. Also plays a key role in mPTP opening, a non-specific pore that enables free passage of the mitochondrial membranes to solutes of up to 1.5 kDa, and which contributes to cell death. It is however unclear if SLC25A4/ANT1 constitutes a pore-forming component of mPTP or regulates it. Acts as a regulator of mitophagy independently of ADP:ATP antiporter activity: promotes mitophagy via interaction with TIMM44, leading to inhibit the presequence translocase TIMM23, thereby promoting stabilization of PINK1. The sequence is that of ADP/ATP translocase 1 from Homo sapiens (Human).